Reading from the N-terminus, the 93-residue chain is uncharacterized protein (93 aa).

An N-terminal signal peptide occupies residues 1–22 (MNKYWLSGIIFLAYGLASPAFS).

This is an uncharacterized protein from Escherichia coli (strain K12).